A 327-amino-acid polypeptide reads, in one-letter code: Fructose import binding protein FruE (327 aa).

An N-terminal signal peptide occupies residues 1 to 22 (MKNWKKAIALVASAAALVSVAA). Cys23 is lipidated: N-palmitoyl cysteine. The S-diacylglycerol cysteine moiety is linked to residue Cys23.

It belongs to the bacterial solute-binding protein 2 family. As to quaternary structure, the complex is composed of an ATP-binding protein (FruK), two transmembrane proteins (FruF and FruG) and a solute-binding protein (FruE).

The protein resides in the cell membrane. Its function is as follows. Part of the high-affinity ABC transporter complex FruEKFG involved in fructose uptake. Can also transport ribose and xylose, with lower affinity. Binds fructose, ribose and xylose, with fructose as the preferred substrate. In Bifidobacterium longum (strain NCC 2705), this protein is Fructose import binding protein FruE.